The sequence spans 160 residues: Transcription elongation factor GreA (160 aa).

Residues 1 to 31 (MAEKTYPMTLEEKEKLEKELEELKLVRRPEI) are a coiled coil.

It belongs to the GreA/GreB family.

Necessary for efficient RNA polymerase transcription elongation past template-encoded arresting sites. The arresting sites in DNA have the property of trapping a certain fraction of elongating RNA polymerases that pass through, resulting in locked ternary complexes. Cleavage of the nascent transcript by cleavage factors such as GreA or GreB allows the resumption of elongation from the new 3'terminus. GreA releases sequences of 2 to 3 nucleotides. In Streptococcus suis (strain 98HAH33), this protein is Transcription elongation factor GreA.